Here is a 162-residue protein sequence, read N- to C-terminus: MSDKIGLFTGSFDPITNGHLDLIERASGLFDKLYVGVFTNPKKAGLLTGLERKAILEKLFVGMENIEVVLSENELVVDVAKRYGVTHLVRGLRNATDLEYESSFDFYNRQLAPGLETIYLIAKPELKFVSSSQVRELLYFKQDIGPYVPEIVSEEIRKNEEK.

S11 lines the substrate pocket. ATP-binding positions include 11–12 (SF) and H19. Residues K43, V76, and R90 each coordinate substrate. ATP-binding positions include 91-93 (GLR), E101, and 126-132 (LKFVSSS).

This sequence belongs to the bacterial CoaD family. Homohexamer. Requires Mg(2+) as cofactor.

It localises to the cytoplasm. It catalyses the reaction (R)-4'-phosphopantetheine + ATP + H(+) = 3'-dephospho-CoA + diphosphate. It participates in cofactor biosynthesis; coenzyme A biosynthesis; CoA from (R)-pantothenate: step 4/5. Its function is as follows. Reversibly transfers an adenylyl group from ATP to 4'-phosphopantetheine, yielding dephospho-CoA (dPCoA) and pyrophosphate. In Streptococcus suis (strain 05ZYH33), this protein is Phosphopantetheine adenylyltransferase.